A 121-amino-acid chain; its full sequence is Large ribosomal subunit protein bL12 (121 aa).

This sequence belongs to the bacterial ribosomal protein bL12 family. Homodimer. Part of the ribosomal stalk of the 50S ribosomal subunit. Forms a multimeric L10(L12)X complex, where L10 forms an elongated spine to which 2 to 4 L12 dimers bind in a sequential fashion. Binds GTP-bound translation factors.

Its function is as follows. Forms part of the ribosomal stalk which helps the ribosome interact with GTP-bound translation factors. Is thus essential for accurate translation. The sequence is that of Large ribosomal subunit protein bL12 from Vibrio atlanticus (strain LGP32) (Vibrio splendidus (strain Mel32)).